The chain runs to 310 residues: MNVGILGIGRYVPEKVVTNHDLEKIMETSDEWIRTRTGIAERRIADDTIDTSYMAVEASKKALEDAGISGEDIDLILVATVTPDRAFPAVACVIQEAIGAKHAAAMDLSAACAGFMYGMITAQQFIQTGTYKNVLVVGSDKLSKIVDWNDRNTAVLFGDGAGAVVMGAVSEGKGVLSFELGADGSGGKHLYQDEYVMMNGREVFKFAVRQLGDSCLRVLDKAGLTKEDVDFLVPHQANIRIMESARERLNLPQEKMSMTIEKFGNTSASSIPIAMVEELQNGRIQDGDLIILVGFGGGLTWGAVALRWGK.

Active-site residues include Cys112 and His235. An ACP-binding region spans residues 236–240; it reads QANIR. Asn265 is a catalytic residue.

This sequence belongs to the thiolase-like superfamily. FabH family. As to quaternary structure, homodimer.

Its subcellular location is the cytoplasm. The enzyme catalyses malonyl-[ACP] + acetyl-CoA + H(+) = 3-oxobutanoyl-[ACP] + CO2 + CoA. Its pathway is lipid metabolism; fatty acid biosynthesis. Functionally, catalyzes the condensation reaction of fatty acid synthesis by the addition to an acyl acceptor of two carbons from malonyl-ACP. Catalyzes the first condensation reaction which initiates fatty acid synthesis and may therefore play a role in governing the total rate of fatty acid production. Possesses both acetoacetyl-ACP synthase and acetyl transacylase activities. Its substrate specificity determines the biosynthesis of branched-chain and/or straight-chain of fatty acids. This is Beta-ketoacyl-[acyl-carrier-protein] synthase III 1 from Bacillus cereus (strain ATCC 14579 / DSM 31 / CCUG 7414 / JCM 2152 / NBRC 15305 / NCIMB 9373 / NCTC 2599 / NRRL B-3711).